Consider the following 195-residue polypeptide: Myelin-associated neurite-outgrowth inhibitor (195 aa).

The Cytoplasmic segment spans residues 1–18 (MNPVYSPGSSGVPYANAK). A helical membrane pass occupies residues 19 to 43 (GIGYPAGFPMGYAAAAPAYSPNMYA). Residues 44 to 143 (GPNPAFQPGY…APIPQPRGNG (100 aa)) lie on the Extracellular side of the membrane. A helical membrane pass occupies residues 144–162 (VAMGMVAGTTMAMSAGTLL). Residues 163-195 (TSHYPTPVAPHQVTMPTYRPPGTPTYSYVPPQW) lie on the Cytoplasmic side of the membrane.

Belongs to the FAM168 family.

Its subcellular location is the cytoplasm. It is found in the perinuclear region. The protein localises to the cell membrane. The protein resides in the cell projection. It localises to the axon. Its function is as follows. Inhibitor of neuronal axonal outgrowth. The protein is Myelin-associated neurite-outgrowth inhibitor (fam168b) of Xenopus tropicalis (Western clawed frog).